Here is a 363-residue protein sequence, read N- to C-terminus: NudC domain-containing protein 3 (363 aa).

The segment at 120–143 (AADLSGPQEVEKEEPPGSQDPEHT) is disordered. Over residues 128–143 (EVEKEEPPGSQDPEHT) the composition is skewed to basic and acidic residues. Residues 187–279 (AIRENYIWSQ…VGEYWWSAIL (93 aa)) enclose the CS domain. Phosphoserine is present on residues S342 and S357.

The polypeptide is NudC domain-containing protein 3 (Nudcd3) (Mus musculus (Mouse)).